Reading from the N-terminus, the 346-residue chain is S-adenosylmethionine:tRNA ribosyltransferase-isomerase (346 aa).

The protein belongs to the QueA family. Monomer.

It is found in the cytoplasm. It carries out the reaction 7-aminomethyl-7-carbaguanosine(34) in tRNA + S-adenosyl-L-methionine = epoxyqueuosine(34) in tRNA + adenine + L-methionine + 2 H(+). It participates in tRNA modification; tRNA-queuosine biosynthesis. Its function is as follows. Transfers and isomerizes the ribose moiety from AdoMet to the 7-aminomethyl group of 7-deazaguanine (preQ1-tRNA) to give epoxyqueuosine (oQ-tRNA). In Shewanella frigidimarina (strain NCIMB 400), this protein is S-adenosylmethionine:tRNA ribosyltransferase-isomerase.